The primary structure comprises 443 residues: 23S rRNA (uracil(1939)-C(5))-methyltransferase RlmD (443 aa).

The TRAM domain maps to 12–70; sequence AKKLSQKIALKVQRLDHLGAGIAEHQGKVVFIPGALPGETVEVQLTEQKKNYARAKLQR. [4Fe-4S] cluster-binding residues include Cys83, Cys89, Cys92, and Cys171. Positions 276, 305, 310, 326, 353, and 373 each coordinate S-adenosyl-L-methionine. The Nucleophile role is filled by Cys399.

Belongs to the class I-like SAM-binding methyltransferase superfamily. RNA M5U methyltransferase family. RlmD subfamily.

It carries out the reaction uridine(1939) in 23S rRNA + S-adenosyl-L-methionine = 5-methyluridine(1939) in 23S rRNA + S-adenosyl-L-homocysteine + H(+). In terms of biological role, catalyzes the formation of 5-methyl-uridine at position 1939 (m5U1939) in 23S rRNA. In Shewanella amazonensis (strain ATCC BAA-1098 / SB2B), this protein is 23S rRNA (uracil(1939)-C(5))-methyltransferase RlmD.